The chain runs to 947 residues: Zinc finger CCCH domain-containing protein 18 (947 aa).

An N-acetylmethionine modification is found at Met-1. Disordered regions lie at residues 1 to 218 (MDVA…PRPT), 275 to 295 (GGPV…TESA), and 387 to 921 (YTEA…TLSR). Residues Ser-6, Ser-32, Ser-44, Ser-57, Ser-63, Ser-70, Ser-74, Ser-79, and Ser-91 each carry the phosphoserine modification. The segment covering 73–85 (KSQDQDSEAHELS) has biased composition (basic and acidic residues). Acidic residues predominate over residues 94–104 (EEGDDAEEDGT). A Phosphothreonine modification is found at Thr-104. Ser-105 and Ser-113 each carry phosphoserine. The segment covering 105–119 (SDLRDEASSVTRELD) has biased composition (basic and acidic residues). 2 stretches are compositionally biased toward acidic residues: residues 120–131 (EHELDYDEEVPE) and 138–153 (QEEE…EEEK). Basic and acidic residues predominate over residues 160–185 (EEGKPDVQSVGEKEPTEAAKEKKKED). Ser-168 is modified (phosphoserine). The segment covering 186 to 202 (DDGEIDDGEIDDDDLEE) has biased composition (acidic residues). The segment covering 203 to 212 (GEVKDPSDRK) has biased composition (basic and acidic residues). The C3H1-type zinc finger occupies 214-240 (RPRPTCRFFMKGNCTWGMNCRFIHPGV). Residues 391-479 (EPYHNYRDRE…DRDKDKEKPK (89 aa)) are compositionally biased toward basic and acidic residues. Position 482 is a phosphoserine (Ser-482). Lys-505 participates in a covalent cross-link: Glycyl lysine isopeptide (Lys-Gly) (interchain with G-Cter in SUMO2). Positions 505 to 515 (KRADEWKDPWR) are enriched in basic and acidic residues. A phosphoserine mark is found at Ser-527, Ser-529, and Ser-531. Residues 540 to 601 (SASSASASNS…SRSRSFSSSP (62 aa)) show a composition bias toward low complexity. Pro residues predominate over residues 602 to 611 (SPSPTPSPHR). Residues Lys-617 and Lys-656 each participate in a glycyl lysine isopeptide (Lys-Gly) (interchain with G-Cter in SUMO2) cross-link. The segment covering 656 to 665 (KPGDLREARR) has biased composition (basic and acidic residues). Composition is skewed to low complexity over residues 687 to 720 (GSSY…SVHS) and 731 to 745 (ASPV…PTPA). Over residues 755–769 (KKEDGVREEKRKRDP) the composition is skewed to basic and acidic residues. Positions 773–804 (PPKSSKAPAGGKASQQAAAPQQAAPGQPQQGS) are enriched in low complexity. Residue Lys-809 is modified to N6-acetyllysine. Lys-812 participates in a covalent cross-link: Glycyl lysine isopeptide (Lys-Gly) (interchain with G-Cter in SUMO2). Positions 819-836 (AAEKGSRKRYEPSDKDRQ) are enriched in basic and acidic residues. A phosphoserine mark is found at Ser-837, Ser-846, Ser-862, Ser-887, and Ser-890. A compositionally biased stretch (low complexity) spans 887–918 (SPQSKSSSKVTSVPGKATDTATAGTKSGKAST). Residue Lys-902 forms a Glycyl lysine isopeptide (Lys-Gly) (interchain with G-Cter in SUMO2) linkage. Residues 915-944 (KASTLSRREELLKQLKAVEDAIARKRAKIP) adopt a coiled-coil conformation.

In terms of assembly, interacts with ZFC3H1 in a RNase-insensitive manner.

The protein localises to the nucleus. This is Zinc finger CCCH domain-containing protein 18 (Zc3h18) from Rattus norvegicus (Rat).